A 4241-amino-acid chain; its full sequence is Intermembrane lipid transfer protein vps13E (4241 aa).

The Chorein N-terminal domain occupies 5-97 (ILPGLLKKIL…GPKDIINTFS (93 aa)). Over residues 120 to 140 (IDSNSNNNNKKNAPSSSSSND) the composition is skewed to low complexity. Disordered regions lie at residues 120–143 (IDSNSNNNNKKNAPSSSSSNDDFF), 234–340 (LSKN…QQQQ), 942–986 (LGTG…VEKE), 1220–1256 (NNNNNNNNNNNNNNNNNNNNNRNLNNNNNNNNNNQKP), 1345–1369 (TTTTTSPRYHHQNHHNHQHKKQNRH), 1534–1571 (KPSSKDNNNNNNNNNNSDSDSDSDTDSSSSSENNYNNN), 2148–2192 (QQQQ…PNVH), and 2217–2282 (VTEK…NNIN). The segment covering 234–254 (LSKNTSTHQQQQPTFNPYVGS) has biased composition (polar residues). The span at 255–264 (QQQQQQQPQQ) shows a compositional bias: low complexity. The segment covering 279-289 (FMNNKNSDEGI) has biased composition (polar residues). Composition is skewed to low complexity over residues 290–313 (SSSSSSSSFNNNNLNIPTLNLNDN), 325–340 (QPTPKSEQYQQQQQQQ), and 942–952 (LGTGNGINNNN). Positions 968-986 (DDGKYPEQDDLDDSKVEKE) are enriched in basic and acidic residues. Residues 1220–1253 (NNNNNNNNNNNNNNNNNNNNNRNLNNNNNNNNNN) show a composition bias toward low complexity. The span at 1352 to 1369 (RYHHQNHHNHQHKKQNRH) shows a compositional bias: basic residues. Composition is skewed to low complexity over residues 1538–1551 (KDNNNNNNNNNNSD), 1559–1571 (DSSSSSENNYNNN), and 2148–2177 (QQQQQQQQQNNNNNQNNQASSNNNNNNNNN). Positions 2178–2188 (VSGNTINNKSV) are enriched in polar residues. Residues 2246 to 2259 (SDDDDDEGEDEDIG) are compositionally biased toward acidic residues. The span at 2265 to 2282 (DHSTSSAPTSRSNYNNIN) shows a compositional bias: polar residues. An SHR-BD domain is found at 2825-3134 (KIVFYNQYWI…IPYVWDLPLE (310 aa)). 3 disordered regions span residues 3973-4000 (PTTTTTTNTTTTPYQSSQNIHSTPYPTE), 4059-4094 (YQHSGSGAPPPPPIITTTTNSTIPPPSSNINQRQLQ), and 4109-4140 (KSMARQQQFQQPPPPPPLPSNNRLSLTPSGSG). Residues 3974-3984 (TTTTTTNTTTT) are compositionally biased toward low complexity. Residues 3985-4000 (PYQSSQNIHSTPYPTE) show a composition bias toward polar residues. Residues 4128-4140 (SNNRLSLTPSGSG) show a composition bias toward polar residues.

It belongs to the VPS13 family.

It is found in the membrane. Its function is as follows. Mediates the transfer of lipids between membranes at organelle contact sites. The polypeptide is Intermembrane lipid transfer protein vps13E (vps13E) (Dictyostelium discoideum (Social amoeba)).